The primary structure comprises 64 residues: Frontoxin V (64 aa).

5 disulfide bridges follow: Cys-3/Cys-24, Cys-6/Cys-11, Cys-17/Cys-41, Cys-45/Cys-57, and Cys-58/Cys-63.

Expressed by the venom gland.

Its subcellular location is the secreted. Produces peripheral paralysis by blocking neuromuscular transmission at the postsynaptic site. Binds to the muscular nicotinic acetylcholine receptor (nAChR). This Micrurus frontalis (Coral snake) protein is Frontoxin V.